A 307-amino-acid polypeptide reads, in one-letter code: tRNA pseudouridine synthase B (307 aa).

Asp38 functions as the Nucleophile in the catalytic mechanism.

Belongs to the pseudouridine synthase TruB family. Type 1 subfamily.

It carries out the reaction uridine(55) in tRNA = pseudouridine(55) in tRNA. Its function is as follows. Responsible for synthesis of pseudouridine from uracil-55 in the psi GC loop of transfer RNAs. The polypeptide is tRNA pseudouridine synthase B (Bacillus cereus (strain ATCC 10987 / NRS 248)).